Reading from the N-terminus, the 163-residue chain is K88 minor fimbrial subunit FaeF (163 aa).

The signal sequence occupies residues 1–22; sequence MKKTMMAAALVLSALSIQSALA.

It localises to the fimbrium. Functionally, K88 minor fimbrial subunit, plays an essential role in the biogenesis of the K88 fimbriae. required at some step in the initiation and/or elongation of the K88 fimbriae. The sequence is that of K88 minor fimbrial subunit FaeF (faeF) from Escherichia coli.